Reading from the N-terminus, the 415-residue chain is Protein-lysine N-trimethyltransferase SMYD5 (415 aa).

The 332-residue stretch at 20–351 (NCVDVRFINN…PGEEICISYL (332 aa)) folds into the SET domain. An MYND-type zinc finger spans residues 95 to 135 (PHPELCKVRPDRHQACPQCQVMYCSSECRQAAMDQYHKILC). Y350 contacts S-adenosyl-L-methionine. The disordered stretch occupies residues 388–415 (DMTSEDEEEVEGEGETEGEDMEDEMTDV).

Belongs to the class V-like SAM-binding methyltransferase superfamily. In terms of tissue distribution, expressed at high levels in the ovary and at lower levels in the fin, testis and brain.

The protein localises to the cytoplasm. The catalysed reaction is L-lysyl-[protein] + 3 S-adenosyl-L-methionine = N(6),N(6),N(6)-trimethyl-L-lysyl-[protein] + 3 S-adenosyl-L-homocysteine + 3 H(+). The enzyme catalyses L-lysyl(20)-[histone H4] + 3 S-adenosyl-L-methionine = N(6),N(6),N(6)-trimethyl-L-lysyl(20)-[histone H4] + 3 S-adenosyl-L-homocysteine + 3 H(+). It catalyses the reaction L-lysyl(36)-[histone H3] + 3 S-adenosyl-L-methionine = N(6),N(6),N(6)-trimethyl-L-lysyl(36)-[histone H3] + 3 S-adenosyl-L-homocysteine + 3 H(+). In terms of biological role, protein-lysine N-trimethyltransferase that specifically catalyzes trimethylation of 'Lys-22' of the RPL40/eL40 subunit of the 60S ribosome, thereby promoting translation elongation and protein synthesis. May also act as a histone methyltransferase in the context of histone octamers, but not on nucleosome substrates: trimethylates 'Lys-36' of histone H3 and 'Lys-20' of histone H4 to form H3K36me3 and H4K20me3, respectively. The histone methyltransferase activity, which is independent of its SET domain, is however unsure in vivo. Plays a crucial role in hematopoiesis during embryogenesis by negatively regulating expression of genes related to both primitive and definitive hematopoiesis. The protein is Protein-lysine N-trimethyltransferase SMYD5 of Danio rerio (Zebrafish).